The following is a 156-amino-acid chain: Ribosomal RNA large subunit methyltransferase H (156 aa).

S-adenosyl-L-methionine-binding positions include L73, G104, and 123–128 (ISSMTL).

Belongs to the RNA methyltransferase RlmH family. Homodimer.

The protein localises to the cytoplasm. It carries out the reaction pseudouridine(1915) in 23S rRNA + S-adenosyl-L-methionine = N(3)-methylpseudouridine(1915) in 23S rRNA + S-adenosyl-L-homocysteine + H(+). In terms of biological role, specifically methylates the pseudouridine at position 1915 (m3Psi1915) in 23S rRNA. The polypeptide is Ribosomal RNA large subunit methyltransferase H (Burkholderia cenocepacia (strain ATCC BAA-245 / DSM 16553 / LMG 16656 / NCTC 13227 / J2315 / CF5610) (Burkholderia cepacia (strain J2315))).